The following is a 429-amino-acid chain: Adenylosuccinate synthetase (429 aa).

GTP contacts are provided by residues 12–18 (GDEGKGK) and 40–42 (GHT). The active-site Proton acceptor is D13. Mg(2+) contacts are provided by D13 and G40. IMP contacts are provided by residues 13 to 16 (DEGK), 38 to 41 (NAGH), T129, R143, Q223, T238, and R302. Residue H41 is the Proton donor of the active site. 298–304 (VVTGRKR) is a binding site for substrate. GTP contacts are provided by residues R304, 330 to 332 (KLD), and 412 to 414 (STS).

Belongs to the adenylosuccinate synthetase family. As to quaternary structure, homodimer. The cofactor is Mg(2+).

It localises to the cytoplasm. It carries out the reaction IMP + L-aspartate + GTP = N(6)-(1,2-dicarboxyethyl)-AMP + GDP + phosphate + 2 H(+). The protein operates within purine metabolism; AMP biosynthesis via de novo pathway; AMP from IMP: step 1/2. Its function is as follows. Plays an important role in the de novo pathway of purine nucleotide biosynthesis. Catalyzes the first committed step in the biosynthesis of AMP from IMP. This is Adenylosuccinate synthetase from Bartonella tribocorum (strain CIP 105476 / IBS 506).